A 332-amino-acid polypeptide reads, in one-letter code: Beta-ketoacyl-[acyl-carrier-protein] synthase III 5 (332 aa).

Active-site residues include Cys111 and His253. Positions 254-258 (QANAR) are ACP-binding. Asn283 is an active-site residue.

It belongs to the thiolase-like superfamily. FabH family. As to quaternary structure, homodimer.

The protein localises to the cytoplasm. The catalysed reaction is malonyl-[ACP] + acetyl-CoA + H(+) = 3-oxobutanoyl-[ACP] + CO2 + CoA. It participates in lipid metabolism; fatty acid biosynthesis. Functionally, catalyzes the condensation reaction of fatty acid synthesis by the addition to an acyl acceptor of two carbons from malonyl-ACP. Catalyzes the first condensation reaction which initiates fatty acid synthesis and may therefore play a role in governing the total rate of fatty acid production. Possesses both acetoacetyl-ACP synthase and acetyl transacylase activities. Its substrate specificity determines the biosynthesis of branched-chain and/or straight-chain of fatty acids. The protein is Beta-ketoacyl-[acyl-carrier-protein] synthase III 5 of Streptomyces coelicolor (strain ATCC BAA-471 / A3(2) / M145).